An 893-amino-acid chain; its full sequence is MKNKKALFIPLFIIILFIAFFNKIINFIINIKWFEEVNYLAVYFTKMRAIIILMIPIFIIFFISIWMYYKSLTINKNKSVVDIGLNKNNYGKKLFFIFNFIVSIFLAYIFSSSYWYRILQFNNSVDFNVKDPIFFKDVSFYIFKLPLFESLYKVIISLLLFLVITTFIAYFILEAKYKIQSRKDINLKNINHGIKSFAGKQLAIVSGLIILFISFGHLIKIWNLVYSSNGVSFGASYTDVHATLLFYKIIVVITLISSIVTLLSIVKGKFKPVSICIGITIFLIVSQNIASFLVQNFIVKSNEKTLEQPYIKNNIDLTRKAFALDDIEIRDFDIKNDLQKQDIADNKASIDNVRINSFKPTLEFYNQVQIIRYYYTFNDIDIDRYNINGKYNQVFLAAREIDTDALNPNTWQNRHLIYTHGFGAVMNKVNSVTSEGQPDFVIKDIPPYNKTNIKLTNPRIYFGEKTNDYVIVNTKINEFDYPREDSNKTNKYNGHAGIKTSFINRLLFAINKKDINFLLSKDIKKDSKIIINRNIVERAKKIAPFLTYDSDPYMVIYNGKIYWIIDAYTTTNRYPYSEPYDSINYIRNSAKVVIDSVDGDTNFYITDKKDPIVNNYAKIFKGLFKEEKDAPKEIREHFRYPKDLFSIQSKVLGKYHVKDPGVFYNGEDLWEVSKDQKHVEGETNTNDAPYIIMKLPDQNKEEMVLLNYFNVMKKDNMIALFGARMDGEQYGKKILYKLPSDKTVYSPYLFKQKINQDTNISKELSLWNREGSKVQYGDTIILPIKNSLLYIEPLYLRASGKNSIPEMKRVILSYNDKLVLSSSIQEGIKEIFNSKDNKINDKNEKDSTKTIDDSKLKKAQEYYNKAIEAQKNGDWTKYGENINELGNILNSIK.

Helical transmembrane passes span 9–29 (IPLF…NFII), 49–69 (AIII…WMYY), 94–114 (LFFI…SSSY), 154–174 (VIIS…FILE), 202–222 (LAIV…IKIW), 246–266 (FYKI…LSIV), and 273–293 (VSIC…ASFL).

It belongs to the UPF0182 family.

The protein localises to the cell membrane. The chain is UPF0182 protein CLI_0022 from Clostridium botulinum (strain Langeland / NCTC 10281 / Type F).